A 394-amino-acid chain; its full sequence is MKKWLFTSESVTEGHPDKIADQVSDAILDAMLEQDPESRVAVETLVATGVAVVAGEVTTKAYVDIPRIVRDTILEIGYTRAKFGFDGETCAVLTSIDEQSPDIALGVNKSLEAKNDGKDKYDIIGAGDQGMMFGYATNETEEMMPLPIVLAHNLARRLATVRKERIVEGFRPDGKTQVTVLYEDGKPIGVKTIVVSTQHDPAMTQEEIEQLVKEHVIKAVVPEEMMLDGIETFVNPTGRFVKGGPAADTGLTGRKIIVDTYGGWIPHGGGAFSGKDPTKVDRSAHYMARYVAKNIVAAGLADRVTLQIAYAIGVAHPVSFMIDAHGTEKVALEKLEKVVKEVFDFRPAAIIDKLNLRRPIYKQVAAYGHFGRIDVEVPWEKLDAVDELKRAFNM.

Residue His15 coordinates ATP. Mg(2+) is bound at residue Asp17. Glu43 is a K(+) binding site. L-methionine contacts are provided by Glu56 and Gln99. The interval 99-109 (QSPDIALGVNK) is flexible loop. ATP is bound by residues 173-175 (DGK), 239-240 (RF), Asp248, 254-255 (RK), Ala271, and Lys275. Asp248 is an L-methionine binding site. Lys279 provides a ligand contact to L-methionine.

Belongs to the AdoMet synthase family. Homotetramer; dimer of dimers. The cofactor is Mg(2+). K(+) serves as cofactor.

The protein localises to the cytoplasm. It carries out the reaction L-methionine + ATP + H2O = S-adenosyl-L-methionine + phosphate + diphosphate. It participates in amino-acid biosynthesis; S-adenosyl-L-methionine biosynthesis; S-adenosyl-L-methionine from L-methionine: step 1/1. Catalyzes the formation of S-adenosylmethionine (AdoMet) from methionine and ATP. The overall synthetic reaction is composed of two sequential steps, AdoMet formation and the subsequent tripolyphosphate hydrolysis which occurs prior to release of AdoMet from the enzyme. The protein is S-adenosylmethionine synthase of Kosmotoga olearia (strain ATCC BAA-1733 / DSM 21960 / TBF 19.5.1).